Consider the following 488-residue polypeptide: Glutamyl-tRNA(Gln) amidotransferase subunit A (488 aa).

Residues Lys-77 and Ser-152 each act as charge relay system in the active site. Ser-176 acts as the Acyl-ester intermediate in catalysis.

It belongs to the amidase family. GatA subfamily. As to quaternary structure, heterotrimer of A, B and C subunits.

It carries out the reaction L-glutamyl-tRNA(Gln) + L-glutamine + ATP + H2O = L-glutaminyl-tRNA(Gln) + L-glutamate + ADP + phosphate + H(+). In terms of biological role, allows the formation of correctly charged Gln-tRNA(Gln) through the transamidation of misacylated Glu-tRNA(Gln) in organisms which lack glutaminyl-tRNA synthetase. The reaction takes place in the presence of glutamine and ATP through an activated gamma-phospho-Glu-tRNA(Gln). The polypeptide is Glutamyl-tRNA(Gln) amidotransferase subunit A (Streptococcus pyogenes serotype M5 (strain Manfredo)).